Here is a 381-residue protein sequence, read N- to C-terminus: Chymosin (381 aa).

A signal peptide spans 1-16 (MRCLVVLLAVFALSQG). Positions 17–58 (AEITRIPLYKGKPLRKALKERGLLEDFLQKQQYGVSSEYSGF) are cleaved as a propeptide — activation peptide. The Peptidase A1 domain maps to 74 to 378 (YFGKIYLGTP…DRANNLVGLA (305 aa)). Residue aspartate 92 is part of the active site. 2 disulfide bridges follow: cysteine 105/cysteine 110 and cysteine 265/cysteine 269. Aspartate 274 is an active-site residue. Cysteine 308 and cysteine 341 are joined by a disulfide.

Belongs to the peptidase A1 family. As to quaternary structure, monomer.

It catalyses the reaction Broad specificity similar to that of pepsin A. Clots milk by cleavage of a single 104-Ser-Phe-|-Met-Ala-107 bond in kappa-chain of casein.. In terms of biological role, chymosin is synthesized in the mucosa of the stomach. The enzyme hydrolyzes casein to paracasein. This Ovis aries (Sheep) protein is Chymosin (CYM).